The sequence spans 195 residues: Cytochrome b-245 light chain (195 aa).

Topologically, residues 2 to 7 (GQIEWA) are cytoplasmic. The helical transmembrane segment at 8–30 (MWANEQALASGLILITGGIVATA) threads the bilayer. Over 31–35 (GRFTQ) the chain is Extracellular. The chain crosses the membrane as a helical span at residues 36–53 (WYFGAYSIVAGVFVCLLE). The Cytoplasmic portion of the chain corresponds to 54–69 (YPRGKRKKGSTMERWG). The stretch at 70–80 (QKYMTAVVKLF) is an intramembrane region. Topologically, residues 81 to 86 (GPFTRN) are cytoplasmic. Residues 87-104 (YYVRAVLHLLLSVPAGFL) form a helical membrane-spanning segment. Residue Leu-105 is a topological domain, extracellular. The chain crosses the membrane as a helical span at residues 106 to 126 (ATILGTACLAIASGIYLLAAV). Residues 127-195 (RGEQWTPIEP…NPIPVTDEVV (69 aa)) lie on the Cytoplasmic side of the membrane. A disordered region spans residues 134-195 (IEPKPRERPQ…NPIPVTDEVV (62 aa)). At Thr-147 the chain carries Phosphothreonine. Residue Lys-149 forms a Glycyl lysine isopeptide (Lys-Gly) (interchain with G-Cter in ubiquitin) linkage. Residue Ser-168 is modified to Phosphoserine.

It belongs to the p22phox family. Component of the phagocyte NADPH oxidase core complex/cytochrome b558 complex, composed of CYBB (heavy chain (beta)) and CYBA (light chain (alpha)). Component of the phagocyte NADPH oxidase complex composed of an obligatory core heterodimer formed by the membrane proteins CYBA and CYBB and the cytosolic regulatory subunits NCF1/p47-phox, NCF2/p67-phox, NCF4/p40-phox and the small GTPase RAC1 or RAC2. Interacts with NCF1 (via SH3 domain). Interacts with SH3PXD2A. Interacts with DUOX1, DUOX2 and TPO. Interacts with NOX4; this interaction mediates superoxide generation. Interacts with calprotectin (S100A8/9). Interacts with GBP7. Interacts with NOXO1. Forms a heterodimer with NOX3 and is essential for activity and cell membrane localization of NOX3. Interacts with NOX1. Post-translationally, phosphorylation at Thr-147 enhances NADPH oxidase activity by promoting NCF1/p47-phox binding. Ubiquitinated at Lys-149 likely by RNF145.

Its subcellular location is the cell membrane. Its function is as follows. Subunit of NADPH oxidase complexes that is required for the NADPH oxidase activity that generates, in various cell types, superoxide from molecular oxygen utilizing NADPH as an electron donor. Subunit of the phagocyte NADPH oxidase complex that mediates the transfer of electrons from cytosolic NADPH to O2 to produce the superoxide anion (O2(-)). In the activated complex, electrons are first transferred from NADPH to flavin adenine dinucleotide (FAD) and subsequently transferred via two heme molecules to molecular oxygen, producing superoxide through an outer-sphere reaction. Activation of the NADPH oxidase complex is initiated by the assembly of cytosolic subunits of the NADPH oxidase complex with the core NADPH oxidase complex to form a complex at the plasma membrane or phagosomal membrane. This activation process is initiated by phosphorylation dependent binding of the cytosolic NCF1/p47-phox subunit to the C-terminus of CYBA/p22-phox. Aassociates with NOX3 to form a functional NADPH oxidase constitutively generating superoxide. This is Cytochrome b-245 light chain from Homo sapiens (Human).